The chain runs to 954 residues: Glycine dehydrogenase (decarboxylating) (954 aa).

An N6-(pyridoxal phosphate)lysine modification is found at lysine 706.

This sequence belongs to the GcvP family. As to quaternary structure, the glycine cleavage system is composed of four proteins: P, T, L and H. The cofactor is pyridoxal 5'-phosphate.

The catalysed reaction is N(6)-[(R)-lipoyl]-L-lysyl-[glycine-cleavage complex H protein] + glycine + H(+) = N(6)-[(R)-S(8)-aminomethyldihydrolipoyl]-L-lysyl-[glycine-cleavage complex H protein] + CO2. Its function is as follows. The glycine cleavage system catalyzes the degradation of glycine. The P protein binds the alpha-amino group of glycine through its pyridoxal phosphate cofactor; CO(2) is released and the remaining methylamine moiety is then transferred to the lipoamide cofactor of the H protein. The chain is Glycine dehydrogenase (decarboxylating) from Pseudomonas savastanoi pv. phaseolicola (strain 1448A / Race 6) (Pseudomonas syringae pv. phaseolicola (strain 1448A / Race 6)).